A 38-amino-acid chain; its full sequence is Large ribosomal subunit protein bL36 (38 aa).

This sequence belongs to the bacterial ribosomal protein bL36 family.

The protein is Large ribosomal subunit protein bL36 of Proteus mirabilis (strain HI4320).